The primary structure comprises 467 residues: Asparagine--tRNA ligase (467 aa).

It belongs to the class-II aminoacyl-tRNA synthetase family. As to quaternary structure, homodimer.

Its subcellular location is the cytoplasm. The enzyme catalyses tRNA(Asn) + L-asparagine + ATP = L-asparaginyl-tRNA(Asn) + AMP + diphosphate + H(+). The protein is Asparagine--tRNA ligase of Histophilus somni (strain 129Pt) (Haemophilus somnus).